A 1040-amino-acid polypeptide reads, in one-letter code: MQVLPPSSTGGPSRLFIMRPVATTLLMVAILLAGIIGYQALPVSALPEVDYPTIQVVTLYPGASPDVMTSAVTAPLERQFGQMSGLKQMSSQSSGGASVITLQFQLTLPLDVAEQEVQAAINAATNLLPSDLPNPPVYSKVNPADPPIMTLAVTSTAMPMTQVEDMVETRVAQKISQISGVGLVTLSGGQRPAVRVKLNAQAIAALGLTSETVRTAITGANVNSAKGSLDGPSRAVTLSANDQMQSAEEYRQLIIAYQNGAPIRLGDVATVEQGAENSWLGAWANKEQAIVMNVQRQPGANIISTADSIRQMLPQLTESLPKSVKVTVLSDRTTNIRASVDDTQFELMMAIALVVMIIYLFLRNIPATIIPGVAVPLSLIGTFAVMVFLDFSINNLTLMALTIATGFVVDDAIVVIENISRYIEKGEKPLAAALKGAGEIGFTIISLTFSLIAVLIPLLFMGDIVGRLFREFAITLAVAILISAVVSLTLTPMMCARMLSQESLRKQNRFSRASEKMFERIIAAYGQGLAKVLNHPWLTLSVALSTLLLSVLLWVFIPKGFFPVQDNGIIQGTLQAPQSSSFANMAQRQRQVADVILQDPAVQSLTSFVGVDGTNPSLNSARLQINLKPLDERDDRVQKVIARLQTAVDKVPGVDLFLQPTQDLTIDTQVSRTQYQFTLQATSLDALSTWVPQLMEKLQQLPQLSDVSSDWQDKGLVAYVNVDRDSASRLGISMADVDNALYNAFGQRLISTIYTQANQYRVVLEHNTENTPGLAALDTIRLTSSDGGVVPLSSIAKIEQRFAPLSINHLDQFPVTTISFNVPDNYSLGDAVQAIMDTEKTLNLPVDITTQFQGSTLAFQSALGSTVWLIVAAVVAMYIVLGILYESFIHPITILSTLPTAGVGALLALLIAGSELDVIAIIGIILLIGIVKKNAIMMIDFALAAEREQGMSPRDAIYQACLLRFRPILMTTLAALLGALPLMLSTGVGAELRRPLGIGMVGGLIVSQVLTLFTTPVIYLLFDRLALWTKSRFARHEEEA.

12 helical membrane passes run 25 to 45, 347 to 367, 369 to 389, 396 to 416, 440 to 460, 472 to 492, 537 to 557, 863 to 883, 888 to 908, 911 to 931, 968 to 988, and 998 to 1018; these read LLMV…PVSA, LMMA…NIPA, IIPG…MVFL, LTLM…IVVI, IGFT…PLLF, FAIT…TLTP, WLTL…WVFI, LGST…VLGI, FIHP…ALLA, IAGS…IGIV, ILMT…STGV, and IGMV…TPVI.

This sequence belongs to the resistance-nodulation-cell division (RND) (TC 2.A.6) family. MdtB subfamily. As to quaternary structure, part of a tripartite efflux system composed of MdtA, MdtB and MdtC. MdtB forms a heteromultimer with MdtC.

The protein localises to the cell inner membrane. In terms of biological role, the MdtABC tripartite complex confers resistance against novobiocin and deoxycholate. The polypeptide is Multidrug resistance protein MdtB (Escherichia coli O127:H6 (strain E2348/69 / EPEC)).